Reading from the N-terminus, the 341-residue chain is Protein pelota homolog (341 aa).

This sequence belongs to the eukaryotic release factor 1 family. Pelota subfamily. As to quaternary structure, monomer. It depends on a divalent metal cation as a cofactor.

It is found in the cytoplasm. Functionally, may function in recognizing stalled ribosomes, interact with stem-loop structures in stalled mRNA molecules, and effect endonucleolytic cleavage of the mRNA. May play a role in the release non-functional ribosomes and degradation of damaged mRNAs. Has endoribonuclease activity. This chain is Protein pelota homolog, found in Metallosphaera sedula (strain ATCC 51363 / DSM 5348 / JCM 9185 / NBRC 15509 / TH2).